Consider the following 151-residue polypeptide: MSDVVVIHTDGGCRPNPGPGGWGAVLRQRHHVREMCGGEPAQTSNNRMELTAPIMALEALTRPVSVHLYTDSTYVRNGITKWVLGWERNGWMTAAKQPVKNADLWRRLQSACARHEVEWFWVKGHSGVADNELADVLATRGLQEALAASVV.

The 143-residue stretch at 1–143 folds into the RNase H type-1 domain; that stretch reads MSDVVVIHTD…ADVLATRGLQ (143 aa). Mg(2+)-binding residues include Asp10, Glu49, Asp71, and Asp135.

This sequence belongs to the RNase H family. In terms of assembly, monomer. Requires Mg(2+) as cofactor.

It localises to the cytoplasm. It carries out the reaction Endonucleolytic cleavage to 5'-phosphomonoester.. In terms of biological role, endonuclease that specifically degrades the RNA of RNA-DNA hybrids. The protein is Ribonuclease H of Mycolicibacterium gilvum (strain PYR-GCK) (Mycobacterium gilvum (strain PYR-GCK)).